The primary structure comprises 473 residues: Kremen protein 1 (473 aa).

The N-terminal stretch at 1–19 (MAPPAARLALLSAAALTLA) is a signal peptide. The Extracellular portion of the chain corresponds to 21–392 (RPAPGPRSGP…ANSHRVEGWT (372 aa)). Residues 31–114 (ECFTANGADY…YWKYCEIPAC (84 aa)) enclose the Kringle domain. 8 cysteine pairs are disulfide-bonded: Cys32–Cys114, Cys55–Cys95, Cys84–Cys109, Cys122–Cys186, Cys147–Cys167, Cys151–Cys169, Cys190–Cys198, and Cys214–Cys240. Asn59 carries N-linked (GlcNAc...) asparagine glycosylation. The 95-residue stretch at 116-210 (MPGNLGCYKD…DGRIILFDTL (95 aa)) folds into the WSC domain. In terms of domain architecture, CUB spans 214 to 321 (CGGNYSAMAA…QGFAVLYQAT (108 aa)). N-linked (GlcNAc...) asparagine glycosylation is found at Asn217, Asn255, Asn293, Asn333, and Asn345. The helical transmembrane segment at 393–413 (VYGLATLLILTVTAVVAKILL) threads the bilayer. The Cytoplasmic segment spans residues 414–473 (HVTFKSHRVPASGDLRDCRQPGASGDIWTIFYEPSTTISIFKKKLKGQSQQDDRNPLVSD). The segment at 414–473 (HVTFKSHRVPASGDLRDCRQPGASGDIWTIFYEPSTTISIFKKKLKGQSQQDDRNPLVSD) is essential for apoptotic activity.

Forms a ternary complex with DKK1 and LRP6. Interacts with LRP6 in a DKK1-dependent manner. Interacts with DKK1 and RSPO1 (via FU repeats). In the adult, widely expressed with high levels in heart, lung, kidney, skeletal muscle and testis.

Its subcellular location is the cell membrane. Receptor for Dickkopf proteins. Cooperates with DKK1/2 to inhibit Wnt/beta-catenin signaling by promoting the endocytosis of Wnt receptors LRP5 and LRP6. In the absence of DKK1, potentiates Wnt-beta-catenin signaling by maintaining LRP5 or LRP6 at the cell membrane. Can trigger apoptosis in a Wnt-independent manner and this apoptotic activity is inhibited upon binding of the ligand DKK1. Plays a role in limb development; attenuates Wnt signaling in the developing limb to allow normal limb patterning and can also negatively regulate bone formation. Modulates cell fate decisions in the developing cochlea with an inhibitory role in hair cell fate specification. This is Kremen protein 1 (Kremen1) from Mus musculus (Mouse).